Here is a 186-residue protein sequence, read N- to C-terminus: MSVADIKKSAEQKMQKSIDAFKADLAKVRTGRAHTGLLDHVQVDYYGSMVPISQVANLGLADARTISVQPWEKKMVSAVERAIRDADLGLNPATMGEVIRVPMPPLTEERRKELTKVVKSEGEDAKVAVRNVRRDANEQFKKLVKDKAISEDDERRGQDEVQKLTDRFVAEVDKLVAEKDKEIMTV.

It belongs to the RRF family.

Its subcellular location is the cytoplasm. Its function is as follows. Responsible for the release of ribosomes from messenger RNA at the termination of protein biosynthesis. May increase the efficiency of translation by recycling ribosomes from one round of translation to another. In Ralstonia nicotianae (strain ATCC BAA-1114 / GMI1000) (Ralstonia solanacearum), this protein is Ribosome-recycling factor.